The chain runs to 393 residues: Acetylornithine aminotransferase (393 aa).

Residues 102 to 103 and Phe-136 contribute to the pyridoxal 5'-phosphate site; that span reads GA. Arg-139 contacts N(2)-acetyl-L-ornithine. 219–222 is a pyridoxal 5'-phosphate binding site; that stretch reads DEVQ. The residue at position 248 (Lys-248) is an N6-(pyridoxal phosphate)lysine. Ser-274 provides a ligand contact to N(2)-acetyl-L-ornithine. Thr-275 serves as a coordination point for pyridoxal 5'-phosphate.

It belongs to the class-III pyridoxal-phosphate-dependent aminotransferase family. ArgD subfamily. Homodimer. Pyridoxal 5'-phosphate is required as a cofactor.

The protein resides in the cytoplasm. It catalyses the reaction N(2)-acetyl-L-ornithine + 2-oxoglutarate = N-acetyl-L-glutamate 5-semialdehyde + L-glutamate. It participates in amino-acid biosynthesis; L-arginine biosynthesis; N(2)-acetyl-L-ornithine from L-glutamate: step 4/4. This chain is Acetylornithine aminotransferase, found in Wolinella succinogenes (strain ATCC 29543 / DSM 1740 / CCUG 13145 / JCM 31913 / LMG 7466 / NCTC 11488 / FDC 602W) (Vibrio succinogenes).